Here is a 175-residue protein sequence, read N- to C-terminus: Gamma-crystallin-1 (175 aa).

Beta/gamma crystallin 'Greek key' domains lie at 2-40 (GKIFFYEERNFQGRHYECGSDYSDLSSYFNRCNSIRVEG) and 41-83 (GNWI…RFLP). The segment at 84 to 88 (NYQGQ) is connecting peptide. 2 consecutive Beta/gamma crystallin 'Greek key' domains span residues 89–129 (YKMR…NVFD) and 130–172 (GHWM…RRVY).

The protein belongs to the beta/gamma-crystallin family. In terms of assembly, monomer.

Its function is as follows. Crystallins are the dominant structural components of the vertebrate eye lens. This Xenopus laevis (African clawed frog) protein is Gamma-crystallin-1 (cryg1).